We begin with the raw amino-acid sequence, 160 residues long: Nucleotide-binding protein VC_1508 (160 aa).

This sequence belongs to the YajQ family.

Its function is as follows. Nucleotide-binding protein. The protein is Nucleotide-binding protein VC_1508 of Vibrio cholerae serotype O1 (strain ATCC 39315 / El Tor Inaba N16961).